The sequence spans 418 residues: Tektin-1 (418 aa).

Coiled coils occupy residues 21 to 107 (KNQY…TLKE), 134 to 177 (HELI…DLKD), 266 to 308 (NGLK…DQEG), and 333 to 384 (AQYR…NTIY).

This sequence belongs to the tektin family. As to quaternary structure, microtubule inner protein component of sperm flagellar doublet microtubules. In terms of processing, ubiquitinated, leading to its degradation. Deubiquitinated by USP16, promoting its stability. In terms of tissue distribution, predominantly expressed in testis. Expressed in airway epithelial cells.

The protein resides in the cytoplasm. It localises to the cytoskeleton. Its subcellular location is the cilium axoneme. The protein localises to the flagellum axoneme. Its function is as follows. Microtubule inner protein (MIP) part of the dynein-decorated doublet microtubules (DMTs) in cilia and flagellar axoneme. Forms filamentous polymers in the walls of ciliary and flagellar microtubules. This Homo sapiens (Human) protein is Tektin-1 (TEKT1).